The primary structure comprises 416 residues: CinA-like protein (416 aa).

It belongs to the CinA family.

This is CinA-like protein from Rippkaea orientalis (strain PCC 8801 / RF-1) (Cyanothece sp. (strain PCC 8801)).